We begin with the raw amino-acid sequence, 70 residues long: UPF0270 protein VP2791 (70 aa).

This sequence belongs to the UPF0270 family.

The chain is UPF0270 protein VP2791 from Vibrio parahaemolyticus serotype O3:K6 (strain RIMD 2210633).